The primary structure comprises 162 residues: Phosphopantetheine adenylyltransferase (162 aa).

Threonine 10 contributes to the substrate binding site. ATP contacts are provided by residues 10 to 11 (TF) and histidine 18. Substrate is bound by residues lysine 42, methionine 74, and arginine 88. Residues 89 to 91 (GLR), glutamate 99, and 124 to 130 (YAFLSST) each bind ATP.

The protein belongs to the bacterial CoaD family. Homohexamer. The cofactor is Mg(2+).

It localises to the cytoplasm. It carries out the reaction (R)-4'-phosphopantetheine + ATP + H(+) = 3'-dephospho-CoA + diphosphate. Its pathway is cofactor biosynthesis; coenzyme A biosynthesis; CoA from (R)-pantothenate: step 4/5. Functionally, reversibly transfers an adenylyl group from ATP to 4'-phosphopantetheine, yielding dephospho-CoA (dPCoA) and pyrophosphate. The chain is Phosphopantetheine adenylyltransferase from Aliivibrio fischeri (strain ATCC 700601 / ES114) (Vibrio fischeri).